We begin with the raw amino-acid sequence, 449 residues long: Acetolactate synthase small subunit 1, chloroplastic (449 aa).

Residues 1 to 30 (MEHIQTRTTLSQLSTLPSDKRLGAIRFKCL) constitute a chloroplast transit peptide. ACT domains follow at residues 31–98 (LVMK…DLSK) and 259–333 (TLSM…DITH).

Belongs to the acetolactate synthase small subunit family. The acetolactate synthase complex contains both large catalytic subunits and small regulatory subunits.

It is found in the plastid. The protein localises to the chloroplast. It functions in the pathway amino-acid biosynthesis; L-isoleucine biosynthesis; L-isoleucine from 2-oxobutanoate: step 1/4. The protein operates within amino-acid biosynthesis; L-valine biosynthesis; L-valine from pyruvate: step 1/4. Functionally, regulatory subunit of acetohydroxy-acid synthase. Probably involved in feedback inhibition by branched-chain amino acids. Not involved in herbicide tolerance. The sequence is that of Acetolactate synthase small subunit 1, chloroplastic from Nicotiana plumbaginifolia (Leadwort-leaved tobacco).